We begin with the raw amino-acid sequence, 274 residues long: MQFSKMHGLGNDFMVVDAVTQNVFFSPELIRRLSDRHLGVGFDQLLVVEPPYDPELDFHYRIFNADGSEVSQCGNGARCFARFVRLKGLTNKRDIRVSTANGRMVLSVTEDELVRVNMGEPNFEPAQVPFRANKAEKTYIMRAAEQTILCGVVSMGNPHCVIQVDNVDTAAVETLGPVLESHERFPERANIGFMQVVRREHIRLRVYERGAGETRACGSGACAAVAVGIQQGLLAEEVRVELPGGRLDIAWKGPGHPLYMTGPAAHIYDGFIHL.

Substrate contacts are provided by Asn-11, Gln-44, and Asn-64. Residue Cys-73 is the Proton donor of the active site. Residues 74–75 (GN), Asn-157, Asn-190, and 208–209 (ER) contribute to the substrate site. Cys-217 functions as the Proton acceptor in the catalytic mechanism. 218-219 (GS) serves as a coordination point for substrate.

This sequence belongs to the diaminopimelate epimerase family. As to quaternary structure, homodimer.

The protein localises to the cytoplasm. The catalysed reaction is (2S,6S)-2,6-diaminopimelate = meso-2,6-diaminopimelate. Its pathway is amino-acid biosynthesis; L-lysine biosynthesis via DAP pathway; DL-2,6-diaminopimelate from LL-2,6-diaminopimelate: step 1/1. In terms of biological role, catalyzes the stereoinversion of LL-2,6-diaminopimelate (L,L-DAP) to meso-diaminopimelate (meso-DAP), a precursor of L-lysine and an essential component of the bacterial peptidoglycan. The sequence is that of Diaminopimelate epimerase from Salmonella agona (strain SL483).